An 861-amino-acid chain; its full sequence is E3 ubiquitin-protein ligase HECTD3 (861 aa).

A2 carries the N-acetylalanine modification. Residue S12 is modified to Phosphoserine. In terms of domain architecture, DOC spans 219–397; that stretch reads DEDLIHFLYD…ASLVRYPRLE (179 aa). Residues 512 to 857 enclose the HECT domain; the sequence is YEKPLDYRWP…NCVAIDTDMS (346 aa). The Glycyl thioester intermediate role is filled by C823.

As to quaternary structure, interacts with TRIOBP. Interacts with STX8.

The protein localises to the cytoplasm. The protein resides in the perinuclear region. The enzyme catalyses S-ubiquitinyl-[E2 ubiquitin-conjugating enzyme]-L-cysteine + [acceptor protein]-L-lysine = [E2 ubiquitin-conjugating enzyme]-L-cysteine + N(6)-ubiquitinyl-[acceptor protein]-L-lysine.. Its pathway is protein modification; protein ubiquitination. In terms of biological role, E3 ubiquitin ligases accepts ubiquitin from an E2 ubiquitin-conjugating enzyme in the form of a thioester and then directly transfers the ubiquitin to targeted substrates. Mediates ubiquitination of TRIOBP and its subsequent proteasomal degradation, thus facilitating cell cycle progression by regulating the turn-over of TRIOBP. Also mediates ubiquitination of STX8. The polypeptide is E3 ubiquitin-protein ligase HECTD3 (Hectd3) (Mus musculus (Mouse)).